Consider the following 119-residue polypeptide: Circadian clock oscillator protein KaiB (119 aa).

This sequence belongs to the KaiB family. May undergo a major conformational rearrangment; in the free state forms homooligomers. When bound to KaiC switches to a monomeric thioredoxin-fold (KaiB(fs)). The active oscillator complex is probably KaiC(6):KaiB(6).

In terms of biological role, component of the KaiBC clock protein complex, which constitutes the main circadian regulator in cyanobacteria; it may modify the ATPase activity of KaiC. May be a metamorphic protein which reversibly switches between an inactive tetrameric fold and a rare, thioredoxin-like monomeric fold (KaiB(fs)). KaiB(fs) binds phospho-KaiC, and perhaps clock output effectors. This chain is Circadian clock oscillator protein KaiB, found in Prochlorococcus marinus (strain MIT 9303).